Consider the following 388-residue polypeptide: Na(+)/H(+) antiporter NhaA (388 aa).

The next 11 helical transmembrane spans lie at 14–34 (GGII…MGAT), 59–79 (MLLW…GLEV), 95–115 (VFPV…YLAF), 125–145 (GWAI…ALLG), 154–174 (IFLM…IALF), 179–199 (LSIV…LLNL), 219–239 (VLKS…FIPL), 254–274 (ILHP…NAGV), 292–312 (IIAG…WLAL), 328–348 (IMAV…IASL), and 356–376 (ALIN…AVVG).

The protein belongs to the NhaA Na(+)/H(+) (TC 2.A.33) antiporter family.

Its subcellular location is the cell inner membrane. The enzyme catalyses Na(+)(in) + 2 H(+)(out) = Na(+)(out) + 2 H(+)(in). Its function is as follows. Na(+)/H(+) antiporter that extrudes sodium in exchange for external protons. The chain is Na(+)/H(+) antiporter NhaA from Salmonella arizonae (strain ATCC BAA-731 / CDC346-86 / RSK2980).